A 72-amino-acid polypeptide reads, in one-letter code: Large ribosomal subunit protein bL28 (72 aa).

The protein belongs to the bacterial ribosomal protein bL28 family.

This chain is Large ribosomal subunit protein bL28, found in Chlorobaculum parvum (strain DSM 263 / NCIMB 8327) (Chlorobium vibrioforme subsp. thiosulfatophilum).